We begin with the raw amino-acid sequence, 180 residues long: Translation initiation factor IF-3 (180 aa).

It belongs to the IF-3 family. In terms of assembly, monomer.

The protein localises to the cytoplasm. Its function is as follows. IF-3 binds to the 30S ribosomal subunit and shifts the equilibrium between 70S ribosomes and their 50S and 30S subunits in favor of the free subunits, thus enhancing the availability of 30S subunits on which protein synthesis initiation begins. This Shewanella oneidensis (strain ATCC 700550 / JCM 31522 / CIP 106686 / LMG 19005 / NCIMB 14063 / MR-1) protein is Translation initiation factor IF-3.